The chain runs to 144 residues: Large ribosomal subunit protein uL13 (144 aa).

This sequence belongs to the universal ribosomal protein uL13 family. As to quaternary structure, part of the 50S ribosomal subunit.

Functionally, this protein is one of the early assembly proteins of the 50S ribosomal subunit, although it is not seen to bind rRNA by itself. It is important during the early stages of 50S assembly. The polypeptide is Large ribosomal subunit protein uL13 (Clostridium perfringens (strain ATCC 13124 / DSM 756 / JCM 1290 / NCIMB 6125 / NCTC 8237 / Type A)).